Consider the following 378-residue polypeptide: RIB43A-like with coiled-coils protein 1 (378 aa).

2 coiled-coil regions span residues 153–250 and 279–334; these read RMQQ…VTSD and EQRA…CAEF.

It belongs to the RIB43A family. In terms of assembly, microtubule inner protein component of sperm flagellar doublet microtubules.

Its subcellular location is the cytoplasm. The protein resides in the cytoskeleton. The protein localises to the flagellum axoneme. The protein is RIB43A-like with coiled-coils protein 1 (Ribc1) of Rattus norvegicus (Rat).